A 146-amino-acid polypeptide reads, in one-letter code: Large ribosomal subunit protein bL9 (146 aa).

This sequence belongs to the bacterial ribosomal protein bL9 family.

Functionally, binds to the 23S rRNA. This Deinococcus deserti (strain DSM 17065 / CIP 109153 / LMG 22923 / VCD115) protein is Large ribosomal subunit protein bL9.